Here is a 97-residue protein sequence, read N- to C-terminus: Serine protease inhibitor Kazal-type 14 (97 aa).

An N-terminal signal peptide occupies residues 1-21; the sequence is MAKSFPVFSLLSFILIHLVLS. The region spanning 34 to 97 is the Kazal-like domain; it reads GIIKVKCPYE…RIRFYHDGKC (64 aa). 3 disulfides stabilise this stretch: cysteine 40/cysteine 79, cysteine 57/cysteine 76, and cysteine 65/cysteine 97. A glycan (N-linked (GlcNAc...) asparagine) is linked at asparagine 51.

The protein localises to the secreted. In terms of biological role, may be a serine protease inhibitor. The polypeptide is Serine protease inhibitor Kazal-type 14 (SPINK14) (Homo sapiens (Human)).